Here is a 305-residue protein sequence, read N- to C-terminus: PI protein (305 aa).

This sequence belongs to the initiator RepB protein family. Homodimer.

Initiation for plasmid R6K DNA replication. The protein is PI protein (pir) of Escherichia coli.